The following is a 358-amino-acid chain: tRNA-specific 2-thiouridylase MnmA (358 aa).

Residues 8–15 (GMSGGVDS) and M34 contribute to the ATP site. C103 functions as the Nucleophile in the catalytic mechanism. C103 and C199 are joined by a disulfide. Residue G127 coordinates ATP. The interval 149-151 (KDQ) is interaction with tRNA. Catalysis depends on C199, which acts as the Cysteine persulfide intermediate. The interaction with tRNA stretch occupies residues 305-306 (RY).

This sequence belongs to the MnmA/TRMU family.

Its subcellular location is the cytoplasm. The enzyme catalyses S-sulfanyl-L-cysteinyl-[protein] + uridine(34) in tRNA + AH2 + ATP = 2-thiouridine(34) in tRNA + L-cysteinyl-[protein] + A + AMP + diphosphate + H(+). Its function is as follows. Catalyzes the 2-thiolation of uridine at the wobble position (U34) of tRNA, leading to the formation of s(2)U34. The protein is tRNA-specific 2-thiouridylase MnmA of Clostridium beijerinckii (strain ATCC 51743 / NCIMB 8052) (Clostridium acetobutylicum).